The primary structure comprises 220 residues: Endonuclease NucS (220 aa).

This sequence belongs to the NucS endonuclease family.

It localises to the cytoplasm. Cleaves both 3' and 5' ssDNA extremities of branched DNA structures. This Mycobacterium leprae (strain TN) protein is Endonuclease NucS.